The primary structure comprises 151 residues: Large ribosomal subunit protein uL22 (151 aa).

This sequence belongs to the universal ribosomal protein uL22 family. As to quaternary structure, part of the 50S ribosomal subunit.

Functionally, this protein binds specifically to 23S rRNA. It makes multiple contacts with different domains of the 23S rRNA in the assembled 50S subunit and ribosome. Its function is as follows. The globular domain of the protein is located near the polypeptide exit tunnel on the outside of the subunit, while an extended beta-hairpin is found that lines the wall of the exit tunnel in the center of the 70S ribosome. This chain is Large ribosomal subunit protein uL22, found in Thermoplasma acidophilum (strain ATCC 25905 / DSM 1728 / JCM 9062 / NBRC 15155 / AMRC-C165).